We begin with the raw amino-acid sequence, 757 residues long: Transcription factor FBD3 (757 aa).

A disordered region spans residues 1–24; the sequence is MSSKRLSQNEQEKSPGTGPPTHKR. Positions 31–58 form a DNA-binding region, zn(2)-C6 fungal-type; it reads CNACRMRKSRCDGHRPSCSSCLSLGVNC. 2 disordered regions span residues 106–161 and 202–222; these read GGTD…DANT and VAPS…TDVP. Over residues 111–120 the composition is skewed to basic and acidic residues; the sequence is NNHHNNHDSP. The span at 125–135 shows a compositional bias: polar residues; sequence TIAQSITSSRP.

The protein resides in the nucleus. In terms of biological role, transcription factor; part of the Fusarium detoxification of benzoxazolinone cluster involved in the degradation of benzoxazolinones produced by the host plant. Maize, wheat, and rye produce the 2 benzoxazinone phytoanticipins 2,4-dihy-droxy-7-methoxy-1,4-benzoxazin-3-one (DIMBOA) and 2,4-dihydroxy-1,4-benzoxazin-3-one (DIBOA) that, due to their inherent instability once released, spontaneously degrade to the more stable corresponding benzoxazolinones, 6-methoxy-2-benzoxazolinone (MBOA) and 2-benzoxazolinone (BOA), respectively. FDB3 controls the transcription of the FDB gene cluster in response to 6-methoxy-2-benzoxazolinone (MBOA). This Fusarium pseudograminearum (strain CS3096) (Wheat and barley crown-rot fungus) protein is Transcription factor FBD3.